A 206-amino-acid chain; its full sequence is LexA repressor (206 aa).

Positions 28 to 48 (VREIGEAVGLASSSTVHGHLD) form a DNA-binding region, H-T-H motif. Catalysis depends on for autocatalytic cleavage activity residues S128 and K166.

This sequence belongs to the peptidase S24 family. As to quaternary structure, homodimer.

It catalyses the reaction Hydrolysis of Ala-|-Gly bond in repressor LexA.. Functionally, represses a number of genes involved in the response to DNA damage (SOS response), including recA and lexA. In the presence of single-stranded DNA, RecA interacts with LexA causing an autocatalytic cleavage which disrupts the DNA-binding part of LexA, leading to derepression of the SOS regulon and eventually DNA repair. In Exiguobacterium sp. (strain ATCC BAA-1283 / AT1b), this protein is LexA repressor.